The chain runs to 342 residues: Probable dual-specificity RNA methyltransferase RlmN (342 aa).

The active-site Proton acceptor is Glu-91. Positions 97 to 326 (YRFGNTACVS…CTVRRELGSD (230 aa)) constitute a Radical SAM core domain. A disulfide bond links Cys-104 and Cys-331. [4Fe-4S] cluster-binding residues include Cys-111, Cys-115, and Cys-118. S-adenosyl-L-methionine-binding positions include 157 to 158 (GE), Ser-189, 212 to 214 (SLH), and Asn-288. Cys-331 (S-methylcysteine intermediate) is an active-site residue.

Belongs to the radical SAM superfamily. RlmN family. It depends on [4Fe-4S] cluster as a cofactor.

It localises to the cytoplasm. It catalyses the reaction adenosine(2503) in 23S rRNA + 2 reduced [2Fe-2S]-[ferredoxin] + 2 S-adenosyl-L-methionine = 2-methyladenosine(2503) in 23S rRNA + 5'-deoxyadenosine + L-methionine + 2 oxidized [2Fe-2S]-[ferredoxin] + S-adenosyl-L-homocysteine. The catalysed reaction is adenosine(37) in tRNA + 2 reduced [2Fe-2S]-[ferredoxin] + 2 S-adenosyl-L-methionine = 2-methyladenosine(37) in tRNA + 5'-deoxyadenosine + L-methionine + 2 oxidized [2Fe-2S]-[ferredoxin] + S-adenosyl-L-homocysteine. In terms of biological role, specifically methylates position 2 of adenine 2503 in 23S rRNA and position 2 of adenine 37 in tRNAs. The polypeptide is Probable dual-specificity RNA methyltransferase RlmN (Thermoanaerobacter pseudethanolicus (strain ATCC 33223 / 39E) (Clostridium thermohydrosulfuricum)).